We begin with the raw amino-acid sequence, 109 residues long: Nucleoid-associated protein MS1507 (109 aa).

The segment at methionine 1 to methionine 21 is disordered.

Belongs to the YbaB/EbfC family. In terms of assembly, homodimer.

Its subcellular location is the cytoplasm. The protein resides in the nucleoid. In terms of biological role, binds to DNA and alters its conformation. May be involved in regulation of gene expression, nucleoid organization and DNA protection. In Mannheimia succiniciproducens (strain KCTC 0769BP / MBEL55E), this protein is Nucleoid-associated protein MS1507.